Reading from the N-terminus, the 717-residue chain is Cleavage stimulation factor subunit 3 (717 aa).

An N-acetylserine modification is found at Ser-2. HAT repeat units lie at residues 45–77, 79–110, 117–152, 163–196, 221–261, 271–303, 319–352, 354–387, and 458–494; these read QPID…AEIK, KNYD…YVRE, SYKE…FLKG, QRIT…YEEG, KEYE…WEKS, LITK…YLEQ, LFSD…YEES, MKYE…FARR, and NEDN…FESN. The tract at residues 683-704 is disordered; the sequence is AVKRPNEDSDEDEEKGAVVPPV. Phosphoserine is present on Ser-691.

As to quaternary structure, homodimer. The CSTF complex is composed of CSTF1 (50 kDa subunit), CSTF2 (64 kDa subunit) and CSTF3 (77 kDa subunit). CSTF3 directly interacts with CSTF1 and CSTF2. Interacts with FIP1L1.

The protein resides in the nucleus. Functionally, one of the multiple factors required for polyadenylation and 3'-end cleavage of mammalian pre-mRNAs. This chain is Cleavage stimulation factor subunit 3 (Cstf3), found in Mus musculus (Mouse).